The primary structure comprises 150 residues: D-aminoacyl-tRNA deacylase (150 aa).

Residues 138–139 carry the Gly-cisPro motif, important for rejection of L-amino acids motif; sequence GP.

This sequence belongs to the DTD family. In terms of assembly, homodimer.

Its subcellular location is the cytoplasm. It catalyses the reaction glycyl-tRNA(Ala) + H2O = tRNA(Ala) + glycine + H(+). It carries out the reaction a D-aminoacyl-tRNA + H2O = a tRNA + a D-alpha-amino acid + H(+). In terms of biological role, an aminoacyl-tRNA editing enzyme that deacylates mischarged D-aminoacyl-tRNAs. Also deacylates mischarged glycyl-tRNA(Ala), protecting cells against glycine mischarging by AlaRS. Acts via tRNA-based rather than protein-based catalysis; rejects L-amino acids rather than detecting D-amino acids in the active site. By recycling D-aminoacyl-tRNA to D-amino acids and free tRNA molecules, this enzyme counteracts the toxicity associated with the formation of D-aminoacyl-tRNA entities in vivo and helps enforce protein L-homochirality. This is D-aminoacyl-tRNA deacylase from Christiangramia forsetii (strain DSM 17595 / CGMCC 1.15422 / KT0803) (Gramella forsetii).